The primary structure comprises 470 residues: Uronate isomerase (470 aa).

Belongs to the metallo-dependent hydrolases superfamily. Uronate isomerase family.

The enzyme catalyses D-glucuronate = D-fructuronate. It carries out the reaction aldehydo-D-galacturonate = keto-D-tagaturonate. It participates in carbohydrate metabolism; pentose and glucuronate interconversion. In Vibrio vulnificus (strain YJ016), this protein is Uronate isomerase.